Consider the following 204-residue polypeptide: Histidine biosynthesis bifunctional protein HisIE (204 aa).

The phosphoribosyl-AMP cyclohydrolase stretch occupies residues 1 to 114 (MLTEQQINQL…FAPAASDWSF (114 aa)). The phosphoribosyl-ATP pyrophosphohydrolase stretch occupies residues 115–204 (LYQLEQLLAS…IGRLRERHEK (90 aa)).

In the N-terminal section; belongs to the PRA-CH family. The protein in the C-terminal section; belongs to the PRA-PH family.

The protein resides in the cytoplasm. The catalysed reaction is 1-(5-phospho-beta-D-ribosyl)-ATP + H2O = 1-(5-phospho-beta-D-ribosyl)-5'-AMP + diphosphate + H(+). It catalyses the reaction 1-(5-phospho-beta-D-ribosyl)-5'-AMP + H2O = 1-(5-phospho-beta-D-ribosyl)-5-[(5-phospho-beta-D-ribosylamino)methylideneamino]imidazole-4-carboxamide. Its pathway is amino-acid biosynthesis; L-histidine biosynthesis; L-histidine from 5-phospho-alpha-D-ribose 1-diphosphate: step 2/9. It participates in amino-acid biosynthesis; L-histidine biosynthesis; L-histidine from 5-phospho-alpha-D-ribose 1-diphosphate: step 3/9. The sequence is that of Histidine biosynthesis bifunctional protein HisIE (hisI) from Yersinia pestis.